Consider the following 538-residue polypeptide: UPF0761 membrane protein PsycPRwf_0630 (538 aa).

The next 6 membrane-spanning stretches (helical) occupy residues 43–63 (LLSI…VPAL), 100–120 (LTAI…TTIE), 143–163 (WTII…SSAV), 183–203 (WVQV…YWFI), 215–235 (IAGV…GIIM), and 247–267 (AFAA…LILL). The tract at residues 427–538 (SVFSAQDADA…IITEDDNPNK (112 aa)) is disordered. Positions 482-493 (PPDADIKAAAAK) are enriched in low complexity. Residues 503 to 514 (KHTETAKQEHKK) show a composition bias toward basic and acidic residues.

This sequence belongs to the UPF0761 family.

The protein localises to the cell inner membrane. The polypeptide is UPF0761 membrane protein PsycPRwf_0630 (Psychrobacter sp. (strain PRwf-1)).